The sequence spans 348 residues: Protein lifeguard 1 (348 aa).

The disordered stretch occupies residues 1–118; sequence MSHEKSFLVS…GNYQEEGPPS (118 aa). Residues 14–41 show a composition bias toward pro residues; that stretch reads YPPPNPGYPVGPQAPMPPYVQPPYPGAP. A compositionally biased stretch (low complexity) spans 42 to 57; that stretch reads YPQAAFQPSPYGQPGY. Residues 82–101 show a composition bias toward pro residues; it reads GPYPQSPFPPNPYGQPPPFQ. The next 7 helical transmembrane spans lie at 142 to 162, 174 to 194, 205 to 225, 230 to 250, 260 to 280, 284 to 304, and 323 to 343; these read VFLV…IFTF, VWTY…LSCC, LVAL…IASF, AVIM…IFSM, MGVL…CIFI, ILEI…LAVD, and FAAL…LTII.

This sequence belongs to the BI1 family. LFG subfamily.

It localises to the membrane. In terms of biological role, potential apoptotic regulator. The polypeptide is Protein lifeguard 1 (Grina) (Rattus norvegicus (Rat)).